The following is a 534-amino-acid chain: Prolyl 4-hydroxylase subunit alpha-1 (534 aa).

A signal peptide spans 1–17 (MIWVVLMMAILLPQSLA). Asn113 carries N-linked (GlcNAc...) asparagine glycosylation. A TPR repeat occupies 205 to 238 (VSVLDYLSYAVYQQGDLDKALLLTKKLLELDPEH). The N-linked (GlcNAc...) asparagine glycan is linked to Asn259. The 109-residue stretch at 411-519 (TAEELQVANY…KWVSNKWLHE (109 aa)) folds into the Fe2OG dioxygenase domain. The Fe cation site is built by His429, Asp431, and His500. Lys510 serves as a coordination point for 2-oxoglutarate.

This sequence belongs to the P4HA family. As to quaternary structure, heterotetramer of two alpha-1 chains and two beta chains (P4HB)(the beta chain is the multi-functional PDI), where P4HB plays the role of a structural subunit; this tetramer catalyzes the formation of 4-hydroxyproline in collagen. The cofactor is Fe(2+). L-ascorbate serves as cofactor. As to expression, expressed at least in brain, heart and lung.

Its subcellular location is the endoplasmic reticulum lumen. It carries out the reaction L-prolyl-[collagen] + 2-oxoglutarate + O2 = trans-4-hydroxy-L-prolyl-[collagen] + succinate + CO2. Its activity is regulated as follows. Inhibited by poly(L-proline). In terms of biological role, catalyzes the post-translational formation of 4-hydroxyproline in -Xaa-Pro-Gly- sequences in collagens and other proteins. The protein is Prolyl 4-hydroxylase subunit alpha-1 (P4ha1) of Mus musculus (Mouse).